The primary structure comprises 346 residues: MKFSPAHYLLPLLPALVLSTRQDYEELEKQLKEVFKERSTILRQLTKTSRELDGIKVNLQSLKNDEQSAKTDVQKLLELGQKQREEMKSLQEALQNQLKETSEKAEKHQATINFLKTEVERKSKMIRDLQNENKSLKNKLLSGNKLCGIHAEESKKIQAQLKELRYGKKDLLFKAQQLTDLEQKLAVAKNELEKAALDRESQMKAMKETVQLCLTSVFRDQPPPPLSLITSNPTRMLLPPRNIASKLPDAAAKSKPQQSASGNNESSQVESTKEGNPSTTACDSQDEGRPCSMKHKESPPSNATAETEPIPQKLQMPPCSECEVKKAPEKPLTSFEGMAAREEKIL.

An N-terminal signal peptide occupies residues 1 to 19 (MKFSPAHYLLPLLPALVLS). Residues 16–211 (LVLSTRQDYE…QMKAMKETVQ (196 aa)) are a coiled coil. Residue asparagine 133 is glycosylated (N-linked (GlcNAc...) asparagine). A leucine-zipper region spans residues 164-192 (LRYGKKDLLFKAQQLTDLEQKLAVAKNEL). Disordered stretches follow at residues 221 to 240 (QPPP…LLPP) and 248 to 346 (PDAA…EKIL). Over residues 250-261 (AAAKSKPQQSAS) the composition is skewed to low complexity. Over residues 262 to 283 (GNNESSQVESTKEGNPSTTACD) the composition is skewed to polar residues. N-linked (GlcNAc...) asparagine glycosylation is present at asparagine 264. Residues 286-298 (DEGRPCSMKHKES) show a composition bias toward basic and acidic residues. An N-linked (GlcNAc...) asparagine glycan is attached at asparagine 302.

It is found in the secreted. This is Leucine zipper protein 2 (LUZP2) from Homo sapiens (Human).